An 83-amino-acid polypeptide reads, in one-letter code: uncharacterized protein (83 aa).

A signal peptide spans 1–20; the sequence is MRRALTLAVLATCAVLPALA.

To P.denitrificans and M.extorquens MoxJ.

This is an uncharacterized protein from Paracoccus denitrificans.